The following is a 245-amino-acid chain: Ribonuclease PH (245 aa).

Phosphate contacts are provided by residues R87 and 125 to 127; that span reads GTR.

This sequence belongs to the RNase PH family. As to quaternary structure, homohexameric ring arranged as a trimer of dimers.

The enzyme catalyses tRNA(n+1) + phosphate = tRNA(n) + a ribonucleoside 5'-diphosphate. Functionally, phosphorolytic 3'-5' exoribonuclease that plays an important role in tRNA 3'-end maturation. Removes nucleotide residues following the 3'-CCA terminus of tRNAs; can also add nucleotides to the ends of RNA molecules by using nucleoside diphosphates as substrates, but this may not be physiologically important. Probably plays a role in initiation of 16S rRNA degradation (leading to ribosome degradation) during starvation. This chain is Ribonuclease PH, found in Streptomyces coelicolor (strain ATCC BAA-471 / A3(2) / M145).